A 225-amino-acid polypeptide reads, in one-letter code: Protein-L-isoaspartate O-methyltransferase (225 aa).

Residue Ser63 is part of the active site.

The protein belongs to the methyltransferase superfamily. L-isoaspartyl/D-aspartyl protein methyltransferase family.

Its subcellular location is the cytoplasm. It carries out the reaction [protein]-L-isoaspartate + S-adenosyl-L-methionine = [protein]-L-isoaspartate alpha-methyl ester + S-adenosyl-L-homocysteine. Functionally, catalyzes the methyl esterification of L-isoaspartyl residues in peptides and proteins that result from spontaneous decomposition of normal L-aspartyl and L-asparaginyl residues. It plays a role in the repair and/or degradation of damaged proteins. The chain is Protein-L-isoaspartate O-methyltransferase from Staphylothermus marinus (strain ATCC 43588 / DSM 3639 / JCM 9404 / F1).